Reading from the N-terminus, the 259-residue chain is O-antigen export system permease protein RfbA (259 aa).

The next 6 membrane-spanning stretches (helical) occupy residues 33 to 53 (FGYL…YFIF), 73 to 95 (FPWQ…NAQI), 111 to 131 (VMME…FLFV), 142 to 162 (WGIP…SIIF), 176 to 196 (VSLG…SDMI), and 228 to 248 (EYIS…LAIF). The ABC transmembrane type-2 domain occupies 33 to 251 (FGYLWSIANP…IVGLAIFNKL (219 aa)).

Belongs to the ABC-2 integral membrane protein family.

It is found in the cell inner membrane. May form an ATP-driven O-antigen export apparatus, in association with RfbB. This chain is O-antigen export system permease protein RfbA (rfbA), found in Klebsiella pneumoniae.